A 39-amino-acid chain; its full sequence is Cytochrome b6-f complex subunit 5 (39 aa).

A helical membrane pass occupies residues 5–25 (LLCGIVLGLVPITLLGLFVAA).

The protein belongs to the PetG family. As to quaternary structure, the 4 large subunits of the cytochrome b6-f complex are cytochrome b6, subunit IV (17 kDa polypeptide, PetD), cytochrome f and the Rieske protein, while the 4 small subunits are PetG, PetL, PetM and PetN. The complex functions as a dimer.

It is found in the cellular thylakoid membrane. In terms of biological role, component of the cytochrome b6-f complex, which mediates electron transfer between photosystem II (PSII) and photosystem I (PSI), cyclic electron flow around PSI, and state transitions. PetG is required for either the stability or assembly of the cytochrome b6-f complex. This is Cytochrome b6-f complex subunit 5 from Prochlorococcus marinus (strain SARG / CCMP1375 / SS120).